We begin with the raw amino-acid sequence, 207 residues long: Small ribosomal subunit protein uS4c (207 aa).

Positions 92–156 (MRLDNILFRL…YQSIITKRIE (65 aa)) constitute an S4 RNA-binding domain.

This sequence belongs to the universal ribosomal protein uS4 family. In terms of assembly, part of the 30S ribosomal subunit. Contacts protein S5. The interaction surface between S4 and S5 is involved in control of translational fidelity.

The protein localises to the plastid. Its subcellular location is the chloroplast. One of the primary rRNA binding proteins, it binds directly to 16S rRNA where it nucleates assembly of the body of the 30S subunit. Functionally, with S5 and S12 plays an important role in translational accuracy. The chain is Small ribosomal subunit protein uS4c (rps4) from Equisetum pratense (Meadow horsetail).